The primary structure comprises 93 residues: DNA-directed RNA polymerase subunit omega (93 aa).

This sequence belongs to the RNA polymerase subunit omega family. As to quaternary structure, the RNAP catalytic core consists of 2 alpha, 1 beta, 1 beta' and 1 omega subunit. When a sigma factor is associated with the core the holoenzyme is formed, which can initiate transcription.

The catalysed reaction is RNA(n) + a ribonucleoside 5'-triphosphate = RNA(n+1) + diphosphate. In terms of biological role, promotes RNA polymerase assembly. Latches the N- and C-terminal regions of the beta' subunit thereby facilitating its interaction with the beta and alpha subunits. The chain is DNA-directed RNA polymerase subunit omega from Actinobacillus pleuropneumoniae serotype 7 (strain AP76).